The chain runs to 520 residues: Cytochrome P450 716A67 (520 aa).

The chain crosses the membrane as a helical span at residues 4–24 (SLAIYYGIILITVTLGLVYTW). Position 466 (cysteine 466) interacts with heme.

The protein belongs to the cytochrome P450 family. Requires heme as cofactor.

The protein localises to the membrane. Functionally, catalyzes hydroxylation at the C-2 position of different intermediates of the hemolytic sapogenin biosynthetic pathway downstream of oleanolic acid synthesis. The polypeptide is Cytochrome P450 716A67 (Medicago truncatula (Barrel medic)).